The following is a 243-amino-acid chain: Large ribosomal subunit protein uL2 (243 aa).

A compositionally biased stretch (basic residues) spans Met-1–Arg-12. 2 disordered regions span residues Met-1 to Thr-38 and Val-198 to Glu-243. 2 stretches are compositionally biased toward basic and acidic residues: residues Tyr-24–Glu-34 and Pro-221–Ser-231.

This sequence belongs to the universal ribosomal protein uL2 family. Part of the 50S ribosomal subunit. Forms a bridge to the 30S subunit in the 70S ribosome.

One of the primary rRNA binding proteins. Required for association of the 30S and 50S subunits to form the 70S ribosome, for tRNA binding and peptide bond formation. It has been suggested to have peptidyltransferase activity; this is somewhat controversial. Makes several contacts with the 16S rRNA in the 70S ribosome. This is Large ribosomal subunit protein uL2 from Haloquadratum walsbyi (strain DSM 16790 / HBSQ001).